Here is a 195-residue protein sequence, read N- to C-terminus: Heat shock protein beta-8 (195 aa).

Residue Ser-56 is modified to Phosphoserine. The residue at position 62 (Thr-62) is a Phosphothreonine. An asymmetric dimethylarginine mark is found at Arg-70 and Arg-77. Positions 73-184 (TATARFGVPA…TFGESSFNNE (112 aa)) constitute a sHSP domain. The tract at residues 175–195 (TFGESSFNNELPQDSQEVTCT) is disordered. Positions 176 to 195 (FGESSFNNELPQDSQEVTCT) are enriched in polar residues.

It belongs to the small heat shock protein (HSP20) family. Monomer. Forms a ternary complex with BAG3 and HSPA1A. Component of the chaperone-assisted selective autophagy (CASA) complex consisting of BAG3, HSPA8/HSC70, HSPB8 and STUB1/CHIP. Interacts with HSPB1. Interacts with DNAJB6. Interacts with BAG3. Phosphorylated.

Its subcellular location is the cytoplasm. The protein resides in the nucleus. Functionally, involved in the chaperone-assisted selective autophagy (CASA), a crucial process for protein quality control, particularly in mechanical strained cells and tissues such as muscle. Displays temperature-dependent chaperone activity. This Macaca mulatta (Rhesus macaque) protein is Heat shock protein beta-8 (HSPB8).